Reading from the N-terminus, the 281-residue chain is 2,3,4,5-tetrahydropyridine-2,6-dicarboxylate N-succinyltransferase (281 aa).

Belongs to the transferase hexapeptide repeat family.

The protein localises to the cytoplasm. It carries out the reaction (S)-2,3,4,5-tetrahydrodipicolinate + succinyl-CoA + H2O = (S)-2-succinylamino-6-oxoheptanedioate + CoA. It functions in the pathway amino-acid biosynthesis; L-lysine biosynthesis via DAP pathway; LL-2,6-diaminopimelate from (S)-tetrahydrodipicolinate (succinylase route): step 1/3. The polypeptide is 2,3,4,5-tetrahydropyridine-2,6-dicarboxylate N-succinyltransferase (Afipia carboxidovorans (strain ATCC 49405 / DSM 1227 / KCTC 32145 / OM5) (Oligotropha carboxidovorans)).